We begin with the raw amino-acid sequence, 230 residues long: Transmembrane ascorbate ferrireductase 2 (230 aa).

2 consecutive transmembrane segments (helical) span residues 5-25 and 50-70; these read VLGGFPIFMVVRVLGFIIAAL and VHPVMMVIGLILFNGEAMLAY. Residues 14–218 enclose the Cytochrome b561 domain; that stretch reads VVRVLGFIIA…LGGFVILGVV (205 aa). Residue histidine 51 coordinates heme b. Lysine 77 and lysine 81 together coordinate L-ascorbate. A helical transmembrane segment spans residues 82–102; it reads LVHLTLQLTAFILSLIGVWAA. Histidine 84 is a binding site for heme b. The monodehydro-L-ascorbate radical site is built by phenylalanine 105, histidine 106, and tyrosine 115. A heme b-binding site is contributed by histidine 118. Residues 120 to 140 form a helical membrane-spanning segment; sequence WLGLACLFLFAFQWAAGFVTY. L-ascorbate contacts are provided by tyrosine 140, arginine 150, and alanine 151. Histidine 157 provides a ligand contact to heme b. The helical transmembrane segment at 157–177 threads the bilayer; the sequence is HVFLGISIYALALVTATTGIL. Residues phenylalanine 182 and asparagine 186 each coordinate monodehydro-L-ascorbate radical. The helical transmembrane segment at 198–218 threads the bilayer; it reads LVNTMGVLILILGGFVILGVV.

As to quaternary structure, homodimer. Requires heme b as cofactor. As to expression, expressed in roots, seedlings, leaves and flowers. Expressed in the L1 layer of the shoot apex, in the epidermis of leaf primordia and young leaves and in vascular bundles. In the differentiation zone of the root, detected in the pericycle and in the epidermis, but not in the cortex. Strongly expressed in the cortical region of the root tip, in the meristematic tissue and in the epidermal cell layer of lateral roots, but not in the root caps. Highly expressed in unfertilized ovules. In mature embryos, expressed in the epidermis, cotyledon tips and root tips.

The protein resides in the membrane. It catalyses the reaction Fe(3+)(out) + L-ascorbate(in) = monodehydro-L-ascorbate radical(in) + Fe(2+)(out) + H(+). Functionally, two-heme-containing cytochrome. Catalyzes ascorbate-dependent transmembrane ferric-chelate reduction. The sequence is that of Transmembrane ascorbate ferrireductase 2 (CYB561B) from Arabidopsis thaliana (Mouse-ear cress).